We begin with the raw amino-acid sequence, 422 residues long: Cytochrome P450-pinF1, plant-inducible (422 aa).

C369 is a heme binding site.

Belongs to the cytochrome P450 family. Requires heme as cofactor.

In terms of biological role, not essential for virulence, but may be involved in the detoxification of plant protective agents at the site of wounding. The protein is Cytochrome P450-pinF1, plant-inducible (cyp103) of Rhizobium radiobacter (Agrobacterium tumefaciens).